The primary structure comprises 86 residues: Large ribosomal subunit protein bL27 (86 aa).

The tract at residues 1–20 (MAHKKAGGSSRNGRDSESKR) is disordered.

The protein belongs to the bacterial ribosomal protein bL27 family.

The polypeptide is Large ribosomal subunit protein bL27 (Paraburkholderia phymatum (strain DSM 17167 / CIP 108236 / LMG 21445 / STM815) (Burkholderia phymatum)).